Consider the following 997-residue polypeptide: Autophagy-related protein 9 (997 aa).

Topologically, residues 1 to 318 (MERDEYQLPN…DVYNYYLGNG (318 aa)) are cytoplasmic. Serine 19 carries the post-translational modification Phosphoserine; by ATG1. The span at 29–39 (VNPSLNSQEMS) shows a compositional bias: polar residues. The disordered stretch occupies residues 29-88 (VNPSLNSQEMSNFPLPDIERGSSLLHSTNDSREDVDENDLRVPESDQGTSTEEEDEVDEE). Residues 79 to 88 (TEEEDEVDEE) are compositionally biased toward acidic residues. Residues lysine 113 and lysine 121 each participate in a glycyl lysine isopeptide (Lys-Gly) (interchain with G-Cter in ubiquitin) cross-link. Phosphoserine is present on serine 122. Disordered stretches follow at residues 128-159 (VEGS…DGFD) and 213-235 (IHHD…QKHG). Lysine 138 is covalently cross-linked (Glycyl lysine isopeptide (Lys-Gly) (interchain with G-Cter in ubiquitin)). Phosphoserine is present on residues serine 143 and serine 144. Residues 144 to 159 (SEEEEDNEFINNDGFD) show a composition bias toward acidic residues. Residues 221–233 (ANNGPRNINGNQK) show a composition bias toward polar residues. The helical transmembrane segment at 319–339 (FYCIILEKILNICTLLFVVFV) threads the bilayer. Residues 340 to 376 (STYMGHCVDYSKLPTSHRVSDIIIDKCYSNSITGFTK) lie on the Lumenal side of the membrane. A helical membrane pass occupies residues 377–397 (FFLWMFYFFVILKIVQLYFDV). Topologically, residues 398-538 (QKLSELQNFY…EELQKRFMLA (141 aa)) are cytoplasmic. The stretch at 539–559 (GFLNIILAPFLVTYFVLLYFF) is an intramembrane region. Topologically, residues 560 to 620 (RYFNEYKTSP…DQFPKEKTNL (61 aa)) are cytoplasmic. The chain crosses the membrane as a helical span at residues 621-641 (FLKFVSFICGSFVAILAFLTV). The Lumenal portion of the chain corresponds to 642–656 (FDPENFLNFEITSDR). Serine 657 is subject to Phosphoserine; by ATG1. Residues 657 to 677 (SVIFYITILGAIWSVSRNTIT) traverse the membrane as a helical segment. The Cytoplasmic portion of the chain corresponds to 678 to 723 (QEYHVFDPEETLKELYEYTHYLPKEWEGRYHKEEIKLEFCKLYNLR). A Glycyl lysine isopeptide (Lys-Gly) (interchain with G-Cter in ubiquitin) cross-link involves residue lysine 701. Residues 724–744 (IVILLRELTSLMITPFVLWFS) lie within the membrane without spanning it. Topologically, residues 745-997 (LPSSAGRIVD…EYYKKSDVGR (253 aa)) are cytoplasmic. Residues serine 787 and serine 792 each carry the phosphoserine modification. Position 794 is a phosphothreonine (threonine 794). Serine 802 is modified (phosphoserine; by ATG1). Threonine 804 bears the Phosphothreonine; by ATG1 mark. Residues serine 831 and serine 842 each carry the phosphoserine; by ATG1 modification. At serine 864 the chain carries Phosphoserine. A phosphoserine; by ATG1 mark is found at serine 948 and serine 969.

This sequence belongs to the ATG9 family. As to quaternary structure, homotrimer; forms a homotrimer with a central pore that forms a path between the two membrane leaflets. Interacts with ATG23 and ATG27 to form a cycling complex for trafficking to the PAS. Interacts (via N-terminus) with ATG11, required for recruitment of ATG9 to the PAS for the Cvt pathway during nutrient-rich conditions. Interacts (via N-terminus) with ATG17; required for recruitment to the PAS during autophagy and starved conditions. Interacts with ATG2 and ATG18; required for the retrieval of ATG9 from the PAS to the cytoplasmic pool. Interacts with ATG41. Interacts with the conserved oligomeric Golgi (COG) complex subunits COG3 and COG4. Interacts with TRS85. Post-translationally, phosphorylated by ATG1; phosphorylation is required for autophagy and cytoplasm to vacuole transport (Cvt) vesicle formation. Phosphorylation by ATG1 regulates ATG18 interaction and preautophagosome elongation. Phosphorylation at Ser-122 is required for selective autophagy by regulating anterograde trafficking and interaction with ATG23 and ATG27. Phosphorylation at Ser-122 prevents ubiquitination by the SCF(MET30) complex. Ubiquitinated by the SCF(MET30) complex in normal conditions, leading to its degradation by the proteasome, thereby preventing inappropriate induction of autophagy. Ubiquitination by the SCF(MET30) complex is prevented by phosphorylation at Ser-122.

The protein resides in the preautophagosomal structure membrane. It localises to the cytoplasmic vesicle membrane. Its subcellular location is the golgi apparatus membrane. It is found in the endoplasmic reticulum membrane. The protein localises to the mitochondrion membrane. The enzyme catalyses a 1,2-diacyl-sn-glycero-3-phosphocholine(in) = a 1,2-diacyl-sn-glycero-3-phosphocholine(out). The catalysed reaction is a 1,2-diacyl-sn-glycero-3-phospho-L-serine(in) = a 1,2-diacyl-sn-glycero-3-phospho-L-serine(out). It catalyses the reaction a 1,2-diacyl-sn-glycero-3-phosphoethanolamine(in) = a 1,2-diacyl-sn-glycero-3-phosphoethanolamine(out). It carries out the reaction a 1,2-diacyl-sn-glycero-3-phospho-(1D-myo-inositol-3-phosphate)(in) = a 1,2-diacyl-sn-glycero-3-phospho-(1D-myo-inositol-3-phosphate)(out). Its function is as follows. Phospholipid scramblase involved in autophagy and cytoplasm to vacuole transport (Cvt) vesicle formation. Cycles between the preautophagosomal structure/phagophore assembly site (PAS) and the cytoplasmic vesicle pool and supplies membrane for the growing autophagosome. Lipid scramblase activity plays a key role in preautophagosomal structure/phagophore assembly by distributing the phospholipids that arrive through ATG2 from the cytoplasmic to the luminal leaflet of the bilayer, thereby driving autophagosomal membrane expansion. Required for mitophagy. Also involved in endoplasmic reticulum-specific autophagic process and is essential for the survival of cells subjected to severe ER stress. Recruits vesicle-tethering proteins TRS85 and YPT1 to the autophagosome formation site. Also recruits ATG23 and ATG8 to the PAS. In Saccharomyces cerevisiae (strain ATCC 204508 / S288c) (Baker's yeast), this protein is Autophagy-related protein 9.